Consider the following 285-residue polypeptide: Shikimate dehydrogenase (NADP(+)) (285 aa).

Shikimate-binding positions include 19-21 (SLS) and threonine 66. The active-site Proton acceptor is lysine 70. Positions 91 and 107 each coordinate shikimate. NADP(+) contacts are provided by residues 129–133 (GSGGA) and leucine 228. Tyrosine 230 lines the shikimate pocket. Residue glycine 251 coordinates NADP(+).

This sequence belongs to the shikimate dehydrogenase family. As to quaternary structure, homodimer.

The catalysed reaction is shikimate + NADP(+) = 3-dehydroshikimate + NADPH + H(+). It functions in the pathway metabolic intermediate biosynthesis; chorismate biosynthesis; chorismate from D-erythrose 4-phosphate and phosphoenolpyruvate: step 4/7. Its function is as follows. Involved in the biosynthesis of the chorismate, which leads to the biosynthesis of aromatic amino acids. Catalyzes the reversible NADPH linked reduction of 3-dehydroshikimate (DHSA) to yield shikimate (SA). The protein is Shikimate dehydrogenase (NADP(+)) of Prochlorococcus marinus (strain MIT 9515).